We begin with the raw amino-acid sequence, 111 residues long: Cytochrome c6 (111 aa).

The signal sequence occupies residues 1–25 (MKRLLSLIFLVFVFFAVMLTPPALA). Heme c contacts are provided by Cys-39, Cys-42, His-43, and Met-83.

Belongs to the cytochrome c family. PetJ subfamily. In terms of assembly, monomer. In terms of processing, binds 1 heme c group covalently per subunit.

It localises to the cellular thylakoid lumen. In terms of biological role, functions as an electron carrier between membrane-bound cytochrome b6-f and photosystem I in oxygenic photosynthesis. In Rippkaea orientalis (strain PCC 8801 / RF-1) (Cyanothece sp. (strain PCC 8801)), this protein is Cytochrome c6.